Consider the following 551-residue polypeptide: Vacuolar protein sorting-associated protein 17 (551 aa).

A disordered region spans residues 1–100; sequence MTSAVPYDPY…SERVILPERS (100 aa). Polar residues-rich tracts occupy residues 29 to 39 and 46 to 64; these read AATTTDGSSSM and TEQTAASVQDNGTANNIQN. The 120-residue stretch at 108-227 folds into the PX domain; that stretch reads LLAKVTGLER…FFIESDFNTY (120 aa). Positions 359–385 form a coiled coil; it reads IMRNLVQAQQNSKAKQEQARRFRSRRD. Residues 474-504 are disordered; it reads RLGRHAVSNNNSDTSQTLKGDSWTGESNRKS. The segment covering 480-504 has biased composition (polar residues); sequence VSNNNSDTSQTLKGDSWTGESNRKS. A Phosphoserine modification is found at Ser-544.

Belongs to the VPS17 family. Component of the retromer complex which consists of VPS29, VPS26, VPS35, VPS5 and VPS17. Component of a retromer subcomplex consisting of VPS5 and VPS17. Post-translationally, phosphorylated on one or more serine residues.

The protein localises to the endomembrane system. In terms of biological role, component of the membrane-associated retromer complex which is essential in endosome-to-Golgi retrograde transport. The VPS5-VPS17 subcomplex may assemble onto the membrane to promote vesicle formation and is required for recycling the vacuolar protein-sorting receptor. Required for the sorting and delivery of a subset of soluble vacuolar hydrolases. Required for retention of late Golgi membrane proteins and vacuolar biogenesis. Involved in vacuolar fragmentation during hyperosmotic stress. In Saccharomyces cerevisiae (strain ATCC 204508 / S288c) (Baker's yeast), this protein is Vacuolar protein sorting-associated protein 17.